Consider the following 295-residue polypeptide: UDP-3-O-acyl-N-acetylglucosamine deacetylase (295 aa).

3 residues coordinate Zn(2+): His75, His232, and Asp236. The Proton donor role is filled by His259.

Belongs to the LpxC family. Zn(2+) serves as cofactor.

It catalyses the reaction a UDP-3-O-[(3R)-3-hydroxyacyl]-N-acetyl-alpha-D-glucosamine + H2O = a UDP-3-O-[(3R)-3-hydroxyacyl]-alpha-D-glucosamine + acetate. Its pathway is glycolipid biosynthesis; lipid IV(A) biosynthesis; lipid IV(A) from (3R)-3-hydroxytetradecanoyl-[acyl-carrier-protein] and UDP-N-acetyl-alpha-D-glucosamine: step 2/6. Its function is as follows. Catalyzes the hydrolysis of UDP-3-O-myristoyl-N-acetylglucosamine to form UDP-3-O-myristoylglucosamine and acetate, the committed step in lipid A biosynthesis. The polypeptide is UDP-3-O-acyl-N-acetylglucosamine deacetylase (Helicobacter pylori (strain ATCC 700392 / 26695) (Campylobacter pylori)).